The following is a 190-amino-acid chain: Pyridoxal 5'-phosphate synthase subunit PdxT (190 aa).

46-48 serves as a coordination point for L-glutamine; the sequence is GES. Catalysis depends on Cys78, which acts as the Nucleophile. L-glutamine-binding positions include Arg108 and 137-138; that span reads IR. Active-site charge relay system residues include His174 and Glu176.

The protein belongs to the glutaminase PdxT/SNO family. In terms of assembly, in the presence of PdxS, forms a dodecamer of heterodimers. Only shows activity in the heterodimer.

It catalyses the reaction aldehydo-D-ribose 5-phosphate + D-glyceraldehyde 3-phosphate + L-glutamine = pyridoxal 5'-phosphate + L-glutamate + phosphate + 3 H2O + H(+). The catalysed reaction is L-glutamine + H2O = L-glutamate + NH4(+). It functions in the pathway cofactor biosynthesis; pyridoxal 5'-phosphate biosynthesis. In terms of biological role, catalyzes the hydrolysis of glutamine to glutamate and ammonia as part of the biosynthesis of pyridoxal 5'-phosphate. The resulting ammonia molecule is channeled to the active site of PdxS. This chain is Pyridoxal 5'-phosphate synthase subunit PdxT, found in Herpetosiphon aurantiacus (strain ATCC 23779 / DSM 785 / 114-95).